Reading from the N-terminus, the 244-residue chain is NAD reductase coq12 (244 aa).

The tract at residues Asn-131–His-158 is disordered. The segment covering Pro-132 to His-158 has biased composition (polar residues).

It localises to the mitochondrion. It catalyses the reaction a reduced flavin + NAD(+) = an oxidized flavin + NADH + 2 H(+). In terms of biological role, NADH-dependent flavin reductase that acts in the coenzyme Q biosynthetic pathway. Required for synthesis of the p-hydroxybenzoic acid (PHB) precursor to form a quinone backbone. This chain is NAD reductase coq12, found in Schizosaccharomyces pombe (strain 972 / ATCC 24843) (Fission yeast).